The chain runs to 559 residues: Cellulose biosynthesis protein BcsG (559 aa).

4 consecutive transmembrane segments (helical) span residues 34-54 (LLWA…MAFL), 68-88 (HWIA…LPGP), 113-133 (FINW…LFLS), and 139-159 (TVFV…GPVF).

It localises to the cell membrane. In terms of biological role, required for cellulose biosynthesis. The protein is Cellulose biosynthesis protein BcsG (bcsG) of Salmonella typhimurium (strain LT2 / SGSC1412 / ATCC 700720).